The chain runs to 465 residues: Calcitonin gene-related peptide type 1 receptor (465 aa).

The signal sequence occupies residues 1–17 (MVICLLLCTPTDIFVVA). At 18-141 (SPEVNETQEY…HTNEGRMTAM (124 aa)) the chain is on the extracellular side. Residues asparagine 22, asparagine 68, asparagine 120, and asparagine 125 are each glycosylated (N-linked (GlcNAc...) asparagine). 3 disulfides stabilise this stretch: cysteine 50/cysteine 76, cysteine 67/cysteine 107, and cysteine 90/cysteine 129. Residues 142–166 (NLFYLALIGHGLSLTSLLISLGIFF) traverse the membrane as a helical segment. Residues 167–177 (YFKSLSCQRIT) lie on the Cytoplasmic side of the membrane. A helical transmembrane segment spans residues 178–200 (LHKNLFFSFVLNSVITIIWLTAV). The Extracellular portion of the chain corresponds to 201 to 211 (ANNQELVQRNP). A helical membrane pass occupies residues 212-240 (TSCKVSQFIHLYLFGCNYFWMLCEGIYLH). The Cytoplasmic portion of the chain corresponds to 241–254 (TLIVVAVFAEKQHL). A helical transmembrane segment spans residues 255 to 275 (MWYYLLGWGFPLIPASIHAIA). Residues 276 to 291 (RSYYYNDNCWISSNTS) are Extracellular-facing. Asparagine 289 carries N-linked (GlcNAc...) asparagine glycosylation. A helical transmembrane segment spans residues 292 to 316 (LLYIIHGPICAALLVNLFFLLNIVR). Topologically, residues 317 to 331 (VLITKLKVTHQAESS) are cytoplasmic. A helical transmembrane segment spans residues 332-353 (LYMKAVRATLILVPLLGIQYVL). Over 354-368 (LPYKPEGRVSSEIYD) the chain is Extracellular. A helical membrane pass occupies residues 369–389 (YIMHILMHYQGLLVATIFCFF). Over 390 to 465 (NGEVQGVLRR…SILKSENPFT (76 aa)) the chain is Cytoplasmic.

This sequence belongs to the G-protein coupled receptor 2 family.

Its subcellular location is the cell membrane. In terms of biological role, may function as G protein-coupled receptor for calcitonin-gene-related peptides and adrenomedullin. Specificity may be modulated by accessory proteins. May activate cAMP-dependent pathway. This Oncorhynchus gorbuscha (Pink salmon) protein is Calcitonin gene-related peptide type 1 receptor (calcrl).